The sequence spans 618 residues: UvrABC system protein C (618 aa).

Residues 15–93 (RTPGVYLMKD…IKEHHPRYNI (79 aa)) enclose the GIY-YIG domain. Residues 203–238 (NNLLRELRERMKMAAEQMNYEEAAFLRDRIRAIEET) form the UVR domain.

Belongs to the UvrC family. Interacts with UvrB in an incision complex.

The protein resides in the cytoplasm. Its function is as follows. The UvrABC repair system catalyzes the recognition and processing of DNA lesions. UvrC both incises the 5' and 3' sides of the lesion. The N-terminal half is responsible for the 3' incision and the C-terminal half is responsible for the 5' incision. This Syntrophus aciditrophicus (strain SB) protein is UvrABC system protein C.